The chain runs to 547 residues: uncharacterized protein (547 aa).

Basic and acidic residues predominate over residues 38–50 (RNLPFHREREKVE). The tract at residues 38–89 (RNLPFHREREKVESNPNSSDEEDLTSTNNTRSSDNTTSDTEDDSGEDSYQVE) is disordered. A compositionally biased stretch (low complexity) spans 62–75 (TSTNNTRSSDNTTS). A run of 12 helical transmembrane segments spans residues 108–128 (IYTL…SSIF), 148–168 (LCSA…APLS), 174–194 (LPLY…GGCS), 197–217 (IWSL…PMSA), 233–253 (GALL…PVMG), 265–285 (WDFW…CFTM), 346–366 (MYLV…PLIF), 377–397 (GLAI…TPII), 418–438 (LFPL…LGWT), 445–465 (WAAP…VLAV), 478–500 (AASA…TIVA), and 514–534 (SLLA…FFWG).

The protein belongs to the major facilitator superfamily. CAR1 family.

It is found in the membrane. This is an uncharacterized protein from Schizosaccharomyces pombe (strain 972 / ATCC 24843) (Fission yeast).